The chain runs to 175 residues: ATP synthase subunit b (175 aa).

A helical membrane pass occupies residues 14–34 (LNPNPGLIFWTALTFLIVLVI).

Belongs to the ATPase B chain family. In terms of assembly, F-type ATPases have 2 components, F(1) - the catalytic core - and F(0) - the membrane proton channel. F(1) has five subunits: alpha(3), beta(3), gamma(1), delta(1), epsilon(1). F(0) has four main subunits: a(1), b(2) and c(10-14). The alpha and beta chains form an alternating ring which encloses part of the gamma chain. F(1) is attached to F(0) by a central stalk formed by the gamma and epsilon chains, while a peripheral stalk is formed by the delta and b chains.

Its subcellular location is the cell inner membrane. Functionally, f(1)F(0) ATP synthase produces ATP from ADP in the presence of a proton or sodium gradient. F-type ATPases consist of two structural domains, F(1) containing the extramembraneous catalytic core and F(0) containing the membrane proton channel, linked together by a central stalk and a peripheral stalk. During catalysis, ATP synthesis in the catalytic domain of F(1) is coupled via a rotary mechanism of the central stalk subunits to proton translocation. In terms of biological role, component of the F(0) channel, it forms part of the peripheral stalk, linking F(1) to F(0). The chain is ATP synthase subunit b from Chlorobaculum tepidum (strain ATCC 49652 / DSM 12025 / NBRC 103806 / TLS) (Chlorobium tepidum).